A 145-amino-acid chain; its full sequence is HTH-type transcriptional regulator MhqR (145 aa).

Residues serine 5–leucine 137 form the HTH marR-type domain. A DNA-binding region (H-T-H motif) is located at residues leucine 51 to glutamine 74.

Negatively regulates mhqA, mhqED, mhqNOP, and azoR2 which may contribute to the degradation of aromatic compounds. The chain is HTH-type transcriptional regulator MhqR (mhqR) from Bacillus subtilis (strain 168).